The sequence spans 454 residues: Probable tRNA methyltransferase 9B (454 aa).

S214 is subject to Phosphoserine.

This sequence belongs to the methyltransferase superfamily. Down-regulated in breast, bladder, colorectal, cervix and testicular carcinomas.

Functionally, may modify wobble uridines in specific arginine and glutamic acid tRNAs. Acts as a tumor suppressor by promoting the expression of LIN9. The chain is Probable tRNA methyltransferase 9B from Homo sapiens (Human).